Reading from the N-terminus, the 64-residue chain is Conotoxin VnMLCL-042 (64 aa).

Positions 1–19 (MLCLPVFIILLLLASPAAP) are cleaved as a signal peptide. The propeptide occupies 20-43 (NPLQTRIQSNLIRAGPEDANMKTD). Methionine 63 is subject to Methionine amide.

The protein belongs to the conotoxin T superfamily. As to expression, expressed by the venom duct.

It localises to the secreted. In Conus ventricosus (Mediterranean cone), this protein is Conotoxin VnMLCL-042.